We begin with the raw amino-acid sequence, 167 residues long: Crossover junction endodeoxyribonuclease RuvC (167 aa).

Residues aspartate 7, glutamate 67, and aspartate 140 contribute to the active site. Residues aspartate 7, glutamate 67, and aspartate 140 each coordinate Mg(2+).

It belongs to the RuvC family. Homodimer which binds Holliday junction (HJ) DNA. The HJ becomes 2-fold symmetrical on binding to RuvC with unstacked arms; it has a different conformation from HJ DNA in complex with RuvA. In the full resolvosome a probable DNA-RuvA(4)-RuvB(12)-RuvC(2) complex forms which resolves the HJ. The cofactor is Mg(2+).

It is found in the cytoplasm. It catalyses the reaction Endonucleolytic cleavage at a junction such as a reciprocal single-stranded crossover between two homologous DNA duplexes (Holliday junction).. Functionally, the RuvA-RuvB-RuvC complex processes Holliday junction (HJ) DNA during genetic recombination and DNA repair. Endonuclease that resolves HJ intermediates. Cleaves cruciform DNA by making single-stranded nicks across the HJ at symmetrical positions within the homologous arms, yielding a 5'-phosphate and a 3'-hydroxyl group; requires a central core of homology in the junction. The consensus cleavage sequence is 5'-(A/T)TT(C/G)-3'. Cleavage occurs on the 3'-side of the TT dinucleotide at the point of strand exchange. HJ branch migration catalyzed by RuvA-RuvB allows RuvC to scan DNA until it finds its consensus sequence, where it cleaves and resolves the cruciform DNA. This Moorella thermoacetica (strain ATCC 39073 / JCM 9320) protein is Crossover junction endodeoxyribonuclease RuvC.